The following is a 494-amino-acid chain: Potassium voltage-gated channel subfamily A member 2 (494 aa).

The segment at 1 to 25 (MTVATGDPSDEAAAHPGNPAEYDPD) is disordered. Residues 1 to 124 (MTVATGDPSD…YELGDEAIEL (124 aa)) are tetramerization domain. The Cytoplasmic segment spans residues 1 to 159 (MTVATGDPSD…LLFEYPESSG (159 aa)). A helical transmembrane segment spans residues 160–181 (PARIIAIISVMVILISIVSFCL). Topologically, residues 182–216 (ETLPIFRNDDDEPHSVFDTNTNTTIYFTSTYFTDP) are extracellular. N-linked (GlcNAc...) asparagine glycosylation is present at asparagine 203. A helical membrane pass occupies residues 217–238 (FFILETLCIIWFSFEFLVRLFA). Residue cysteine 239 is the site of S-palmitoyl cysteine attachment. At 239–249 (CPSKSGFFGNV) the chain is on the cytoplasmic side. Residues 250–270 (MNIIDVVAIIPYFITLATELA) traverse the membrane as a helical segment. The Extracellular segment spans residues 271-284 (EKPEDGQAGQQAMS). Residues 285–305 (LAILRVIRLVRVFRIFKLSRH) traverse the membrane as a helical; Voltage-sensor segment. The Cytoplasmic portion of the chain corresponds to 306–320 (SKGLQILGQTLKASM). Residues 307 to 320 (KGLQILGQTLKASM) form an S4-S5 linker region. A helical membrane pass occupies residues 321 to 342 (RELGLLIFFLFIGVILFSSAVY). The Extracellular segment spans residues 343–356 (FAEADEPESQFESI). The segment at residues 357–368 (PDAFWWAVVSMT) is an intramembrane region (helical). The Selectivity filter signature appears at 369–374 (TVGYGD). Residues 369-376 (TVGYGDMV) lie within the membrane without spanning it. Over 377–383 (PTTIGGK) the chain is Extracellular. A helical membrane pass occupies residues 384–412 (IVGSLCAIAGVLTIALPVPVIVSNFNYFY). The Cytoplasmic portion of the chain corresponds to 413 to 494 (HRETEGEEQA…VNITKMLTDV (82 aa)). The PDZ-binding signature appears at 492–494 (TDV).

The protein belongs to the potassium channel family. A (Shaker) (TC 1.A.1.2) subfamily. Kv1.2/KCNA2 sub-subfamily. Homotetramer and heterotetramer with other family members. In terms of tissue distribution, expressed in oligodendrocytes.

It is found in the cell membrane. The enzyme catalyses K(+)(in) = K(+)(out). Functionally, voltage-gated potassium channel that mediates transmembrane potassium transport in excitable membranes, primarily in the brain and central nervous system. Prevents aberrant action potential firing and regulates neuronal output. Forms tetrameric potassium-selective channels through which potassium ions pass in accordance with their electrochemical gradient. The channel alternates between opened and closed conformations in response to the voltage difference across the membrane. Can form functional homotetrameric channels and heterotetrameric channels with other family members; the channels characteristics depend critically on the types of channel-forming alpha subunits that are present. Channel properties are modulated by cytoplasmic beta subunits that regulate the subcellular location of the alpha subunits. In vivo, membranes probably contain a mixture of heteromeric potassium channel complexes, making it difficult to assign currents observed in intact tissues to any particular potassium channel family member. Homotetrameric KCNA2 forms a delayed-rectifier potassium channel that opens in response to membrane depolarization, followed by slow spontaneous channel closure. Regulates neuronal excitability and plays a role as pacemaker in the regulation of neuronal action potentials. KCNA2-containing channels play a presynaptic role and prevent hyperexcitability and aberrant action potential firing. Response to toxins that are selective for KCNA2-containing potassium channels suggests that in Purkinje cells, dendritic subthreshold KCNA2-containing potassium channels prevent random spontaneous calcium spikes, suppressing dendritic hyperexcitability without hindering the generation of somatic action potentials, and thereby play an important role in motor coordination. Plays a role in the induction of long-term potentiation of neuron excitability in the CA3 layer of the hippocampus. The chain is Potassium voltage-gated channel subfamily A member 2 (kcna2) from Oncorhynchus mykiss (Rainbow trout).